The sequence spans 254 residues: Bowman-Birk type bran trypsin inhibitor (254 aa).

The N-terminal stretch at 1–22 is a signal peptide; that stretch reads MSNTTMATSTILLFLLAGLAAA. Positions 23-118 are excised as a propeptide; the sequence is HGDGDTTIRL…KCTAALDGLS (96 aa). 3 consecutive repeats follow at residues 46–120, 121–187, and 188–251; these read KPWD…LSME, RPWK…LCTP, and RPWG…CKPR. Cystine bridges form between C51/C248, C125/C185, C126/C143, C152/C159, C156/C172, C193/C248, C194/C209, C199/C207, C216/C223, and C220/C236. Residues 252–254 constitute a propeptide that is removed on maturation; sequence AEN.

This sequence belongs to the Bowman-Birk serine protease inhibitor family. As to expression, expressed in roots, leaves and flowers.

This chain is Bowman-Birk type bran trypsin inhibitor (RBBI3.3), found in Oryza sativa subsp. indica (Rice).